A 62-amino-acid polypeptide reads, in one-letter code: U10-buthitoxin-Hj1a (62 aa).

Positions 1–22 are cleaved as a signal peptide; it reads MQKIFIILVLFCILKFNVDVEG. Intrachain disulfides connect C28–C46, C33–C59, and C37–C61.

Belongs to the short scorpion toxin superfamily. Potassium channel inhibitor family. Alpha-KTx 23 subfamily. In terms of tissue distribution, expressed by the venom gland.

It localises to the secreted. Its function is as follows. May block potassium channels. The sequence is that of U10-buthitoxin-Hj1a from Hottentotta judaicus (Black scorpion).